The following is a 159-amino-acid chain: NADH-quinone oxidoreductase subunit B (159 aa).

4 residues coordinate [4Fe-4S] cluster: C36, C37, C102, and C132.

It belongs to the complex I 20 kDa subunit family. NDH-1 is composed of 14 different subunits. Subunits NuoB, C, D, E, F, and G constitute the peripheral sector of the complex. The cofactor is [4Fe-4S] cluster.

It is found in the cell inner membrane. The catalysed reaction is a quinone + NADH + 5 H(+)(in) = a quinol + NAD(+) + 4 H(+)(out). NDH-1 shuttles electrons from NADH, via FMN and iron-sulfur (Fe-S) centers, to quinones in the respiratory chain. Couples the redox reaction to proton translocation (for every two electrons transferred, four hydrogen ions are translocated across the cytoplasmic membrane), and thus conserves the redox energy in a proton gradient. The sequence is that of NADH-quinone oxidoreductase subunit B from Delftia acidovorans (strain DSM 14801 / SPH-1).